A 175-amino-acid polypeptide reads, in one-letter code: Large ribosomal subunit protein uL10 (175 aa).

The protein belongs to the universal ribosomal protein uL10 family. Part of the ribosomal stalk of the 50S ribosomal subunit. The N-terminus interacts with L11 and the large rRNA to form the base of the stalk. The C-terminus forms an elongated spine to which L12 dimers bind in a sequential fashion forming a multimeric L10(L12)X complex.

Functionally, forms part of the ribosomal stalk, playing a central role in the interaction of the ribosome with GTP-bound translation factors. This chain is Large ribosomal subunit protein uL10, found in Synechococcus sp. (strain CC9605).